Consider the following 121-residue polypeptide: Surface glycoprotein CD59 homolog (121 aa).

Positions Met1–Ser19 are cleaved as a signal peptide. The UPAR/Ly6 domain maps to Leu20–Lys104. 5 cysteine pairs are disulfide-bonded: Cys22–Cys45, Cys25–Cys32, Cys38–Cys58, Cys64–Cys82, and Cys83–Cys88. N-linked (GlcNAc...) asparagine; by host glycosylation is present at Asn24. Residue Asn96 is the site of GPI-anchor amidated asparagine; by host attachment. The propeptide at Ile97–Leu121 is removed in mature form.

Its subcellular location is the host cell membrane. The chain is Surface glycoprotein CD59 homolog (15) from Saimiriine herpesvirus 2 (strain 11) (SaHV-2).